The primary structure comprises 227 residues: Protein lin-28 (227 aa).

Residues 1–17 (MSTVVSEGRNDGNNRYS) show a composition bias toward polar residues. The interval 1 to 27 (MSTVVSEGRNDGNNRYSPQDEVEDRLP) is disordered. The CSD domain maps to 52 to 120 (RYFGSCKWFN…GREAYAVSGE (69 aa)). 2 CCHC-type zinc fingers span residues 143–160 (RCFR…SCPN) and 166–183 (KVCY…ICPE). Zn(2+)-binding residues include cysteine 144, cysteine 147, histidine 153, cysteine 158, cysteine 168, cysteine 171, histidine 176, and cysteine 181. The interval 181–227 (CPERRRKHRPEQVAAEEAEAARMAAEKSSPTTSDDDIREKNSNSSDE) is disordered.

The protein belongs to the lin-28 family. In terms of assembly, component of a complex at least containing lep-2, lin-28 and the long non-coding RNA lep-5, which mediates the degradation of lin-28. Post-translationally, cleavage by caspase ced-3 during larval development probably induces lin-28 degradation.

It localises to the cytoplasm. Its function is as follows. Heterochronic protein which controls the choice of stage specific cell fates. Regulates the timing of the second larval stage events (L2 events) in the hypodermis. May negatively regulate the larval to adult transition via the suppression of the microRNA (miRNA) let-7 during L3. Through this regulatory role, controls the timing of the sexual maturation of the nervous system. Also has a role in the fox-1-sex-1-mediated determination of sexual fate. Plays a role in governing the developmental timing of male tail tip morphogenesis. Plays a role in controlling the seam cell number during larval stages. Plays a role in vulval development. This Caenorhabditis elegans protein is Protein lin-28.